We begin with the raw amino-acid sequence, 59 residues long: uncharacterized protein (59 aa).

This is an uncharacterized protein from Chenopodium amaranticolor (Quinoa).